The following is a 246-amino-acid chain: MADS-box protein EJ2 (246 aa).

Residues 1-61 form the MADS-box domain; sequence MGRGRVELKR…GKLYEFCSTS (61 aa). Positions 87–177 constitute a K-box domain; the sequence is TQNNYHEYLR…RRKLEESVAG (91 aa).

The protein resides in the nucleus. Functionally, MADS-box transcription factor that acts redundantly with J2 to control meristem maturation and inflorescence architecture. The polypeptide is MADS-box protein EJ2 (Solanum lycopersicum (Tomato)).